The primary structure comprises 285 residues: Phosphatidylglycerol--prolipoprotein diacylglyceryl transferase (285 aa).

A run of 4 helical transmembrane segments spans residues 30-50 (LEIR…HWHI), 67-87 (LMLW…ILLY), 103-123 (WHGG…VSIV), and 129-149 (VRVM…LFLG). Position 150 (Arg-150) interacts with a 1,2-diacyl-sn-glycero-3-phospho-(1'-sn-glycerol). A run of 3 helical transmembrane segments spans residues 184–204 (SQVY…SILA), 213–233 (FGVL…AVEF), and 252–272 (GQVL…LTVL).

It belongs to the Lgt family.

The protein localises to the cell inner membrane. It carries out the reaction L-cysteinyl-[prolipoprotein] + a 1,2-diacyl-sn-glycero-3-phospho-(1'-sn-glycerol) = an S-1,2-diacyl-sn-glyceryl-L-cysteinyl-[prolipoprotein] + sn-glycerol 1-phosphate + H(+). The protein operates within protein modification; lipoprotein biosynthesis (diacylglyceryl transfer). Functionally, catalyzes the transfer of the diacylglyceryl group from phosphatidylglycerol to the sulfhydryl group of the N-terminal cysteine of a prolipoprotein, the first step in the formation of mature lipoproteins. This is Phosphatidylglycerol--prolipoprotein diacylglyceryl transferase from Anaplasma marginale (strain Florida).